Reading from the N-terminus, the 216-residue chain is 3-keto-L-gulonate-6-phosphate decarboxylase UlaD (216 aa).

Aspartate 11 serves as a coordination point for substrate. The Mg(2+) site is built by glutamate 33 and aspartate 62. Arginine 192 lines the substrate pocket.

This sequence belongs to the HPS/KGPDC family. KGPDC subfamily. As to quaternary structure, homodimer. Mg(2+) is required as a cofactor.

The catalysed reaction is 3-dehydro-L-gulonate 6-phosphate + H(+) = L-xylulose 5-phosphate + CO2. It participates in cofactor degradation; L-ascorbate degradation; D-xylulose 5-phosphate from L-ascorbate: step 2/4. Its function is as follows. Catalyzes the decarboxylation of 3-keto-L-gulonate-6-P into L-xylulose-5-P. Is involved in the anaerobic L-ascorbate utilization. This is 3-keto-L-gulonate-6-phosphate decarboxylase UlaD from Escherichia coli O139:H28 (strain E24377A / ETEC).